We begin with the raw amino-acid sequence, 264 residues long: Virulence plasmid protein pGP3-D (264 aa).

The sequence is that of Virulence plasmid protein pGP3-D from Chlamydia trachomatis serovar L2 (strain ATCC VR-902B / DSM 19102 / 434/Bu).